Reading from the N-terminus, the 414-residue chain is Tryptophan synthase beta chain (414 aa).

N6-(pyridoxal phosphate)lysine is present on Lys105.

Belongs to the TrpB family. In terms of assembly, tetramer of two alpha and two beta chains. Requires pyridoxal 5'-phosphate as cofactor.

It carries out the reaction (1S,2R)-1-C-(indol-3-yl)glycerol 3-phosphate + L-serine = D-glyceraldehyde 3-phosphate + L-tryptophan + H2O. It participates in amino-acid biosynthesis; L-tryptophan biosynthesis; L-tryptophan from chorismate: step 5/5. In terms of biological role, the beta subunit is responsible for the synthesis of L-tryptophan from indole and L-serine. The protein is Tryptophan synthase beta chain of Gloeobacter violaceus (strain ATCC 29082 / PCC 7421).